Here is a 256-residue protein sequence, read N- to C-terminus: UPF0246 protein Bpet1601 (256 aa).

The protein belongs to the UPF0246 family.

The polypeptide is UPF0246 protein Bpet1601 (Bordetella petrii (strain ATCC BAA-461 / DSM 12804 / CCUG 43448)).